Consider the following 379-residue polypeptide: Cytochrome b (379 aa).

4 helical membrane passes run 33 to 53, 77 to 98, 113 to 133, and 178 to 198; these read FGSLLGACLIIQVITGLFLAM, WMIRYLHANGASMFFLCLFIHV, WNVGIILLFSVMATAFMGYVL, and FFALHFILPFIISAWVMIHLL. Residues histidine 83 and histidine 97 each contribute to the heme b site. Heme b is bound by residues histidine 182 and histidine 196. Histidine 201 serves as a coordination point for a ubiquinone. 4 helical membrane-spanning segments follow: residues 226–246, 288–308, 320–340, and 347–367; these read TKDFLGLLLLILLLMTLALFY, LGGVVALILSILILMIIPFLQ, LSQFLFWILVADLLTLTWIGG, and FISIGQTASMLYFSLMIFIMP.

This sequence belongs to the cytochrome b family. The cytochrome bc1 complex contains 11 subunits: 3 respiratory subunits (MT-CYB, CYC1 and UQCRFS1), 2 core proteins (UQCRC1 and UQCRC2) and 6 low-molecular weight proteins (UQCRH/QCR6, UQCRB/QCR7, UQCRQ/QCR8, UQCR10/QCR9, UQCR11/QCR10 and a cleavage product of UQCRFS1). This cytochrome bc1 complex then forms a dimer. The cofactor is heme b.

The protein localises to the mitochondrion inner membrane. In terms of biological role, component of the ubiquinol-cytochrome c reductase complex (complex III or cytochrome b-c1 complex) that is part of the mitochondrial respiratory chain. The b-c1 complex mediates electron transfer from ubiquinol to cytochrome c. Contributes to the generation of a proton gradient across the mitochondrial membrane that is then used for ATP synthesis. The sequence is that of Cytochrome b (MT-CYB) from Lepilemur septentrionalis (Northern sportive lemur).